An 89-amino-acid polypeptide reads, in one-letter code: Large ribosomal subunit protein eL34 (89 aa).

Belongs to the eukaryotic ribosomal protein eL34 family.

This chain is Large ribosomal subunit protein eL34 (rpl34e), found in Methanocaldococcus jannaschii (strain ATCC 43067 / DSM 2661 / JAL-1 / JCM 10045 / NBRC 100440) (Methanococcus jannaschii).